Here is a 476-residue protein sequence, read N- to C-terminus: Aspartyl/glutamyl-tRNA(Asn/Gln) amidotransferase subunit B (476 aa).

Belongs to the GatB/GatE family. GatB subfamily. In terms of assembly, heterotrimer of A, B and C subunits.

It catalyses the reaction L-glutamyl-tRNA(Gln) + L-glutamine + ATP + H2O = L-glutaminyl-tRNA(Gln) + L-glutamate + ADP + phosphate + H(+). The catalysed reaction is L-aspartyl-tRNA(Asn) + L-glutamine + ATP + H2O = L-asparaginyl-tRNA(Asn) + L-glutamate + ADP + phosphate + 2 H(+). Functionally, allows the formation of correctly charged Asn-tRNA(Asn) or Gln-tRNA(Gln) through the transamidation of misacylated Asp-tRNA(Asn) or Glu-tRNA(Gln) in organisms which lack either or both of asparaginyl-tRNA or glutaminyl-tRNA synthetases. The reaction takes place in the presence of glutamine and ATP through an activated phospho-Asp-tRNA(Asn) or phospho-Glu-tRNA(Gln). This is Aspartyl/glutamyl-tRNA(Asn/Gln) amidotransferase subunit B from Enterococcus faecalis (strain ATCC 700802 / V583).